A 508-amino-acid polypeptide reads, in one-letter code: Putative glycosyl hydrolase ecdF (508 aa).

Residues 1-15 form the signal peptide; sequence MFLHILCLLAGQALA. 4 N-linked (GlcNAc...) asparagine glycosylation sites follow: asparagine 99, asparagine 122, asparagine 275, and asparagine 362.

Belongs to the glycosyl hydrolase 32 family.

This chain is Putative glycosyl hydrolase ecdF, found in Aspergillus rugulosus (Emericella rugulosa).